A 434-amino-acid chain; its full sequence is Probable phosphoglucosamine mutase (434 aa).

The active-site Phosphoserine intermediate is Ser91. Mg(2+)-binding residues include Ser91, Asp229, Asp231, and Asp233. Position 91 is a phosphoserine (Ser91).

This sequence belongs to the phosphohexose mutase family. Mg(2+) serves as cofactor. Activated by phosphorylation.

The enzyme catalyses alpha-D-glucosamine 1-phosphate = D-glucosamine 6-phosphate. In terms of biological role, catalyzes the conversion of glucosamine-6-phosphate to glucosamine-1-phosphate. This chain is Probable phosphoglucosamine mutase, found in Methanosarcina acetivorans (strain ATCC 35395 / DSM 2834 / JCM 12185 / C2A).